The primary structure comprises 818 residues: Cytosolic phospholipase A2 delta (818 aa).

One can recognise a C2 domain in the interval 5–124 (SPGGPPGHPY…LPGKLLRKTF (120 aa)). Residues aspartate 38, aspartate 44, aspartate 94, aspartate 96, and aspartate 102 each coordinate Ca(2+). Residues 273–818 (GCPEELAVHL…LEARPPRAQT (546 aa)) form the PLA2c domain. Residue 330-331 (GG) participates in substrate binding. Serine 361 acts as the Nucleophile in catalysis. Aspartate 647 serves as the catalytic Proton acceptor.

Ca(2+) serves as cofactor. In terms of tissue distribution, expressed in stratified squamous epithelia, such as those in skin and cervix, but not in other tissues. Strongly expressed in the upper spinous layer of the psoriatic epidermis, expressed weakly and discontinuously in atopic dermatitis and mycosis fungoides, and not detected in the epidermis of normal skin.

It is found in the cytoplasm. Its subcellular location is the cytosol. The protein localises to the membrane. It catalyses the reaction a 1,2-diacyl-sn-glycero-3-phosphocholine + H2O = a 1-acyl-sn-glycero-3-phosphocholine + a fatty acid + H(+). It carries out the reaction 1-hexadecanoyl-2-(5Z,8Z,11Z,14Z-eicosatetraenoyl)-sn-glycero-3-phosphocholine + H2O = 1-hexadecanoyl-sn-glycero-3-phosphocholine + (5Z,8Z,11Z,14Z)-eicosatetraenoate + H(+). The enzyme catalyses 1-hexadecanoyl-2-(9Z,12Z-octadecadienoyl)-sn-glycero-3-phosphocholine + H2O = (9Z,12Z)-octadecadienoate + 1-hexadecanoyl-sn-glycero-3-phosphocholine + H(+). The catalysed reaction is 1-hexadecanoyl-2-(9Z-octadecenoyl)-sn-glycero-3-phosphocholine + H2O = 1-hexadecanoyl-sn-glycero-3-phosphocholine + (9Z)-octadecenoate + H(+). It catalyses the reaction 1-hexadecanoyl-2-(5Z,8Z,11Z,14Z-eicosatetraenoyl)-sn-glycero-3-phosphoethanolamine + H2O = 1-hexadecanoyl-sn-glycero-3-phosphoethanolamine + (5Z,8Z,11Z,14Z)-eicosatetraenoate + H(+). It carries out the reaction 1-hexadecanoyl-2-(9Z,12Z-octadecadienoyl)-sn-glycero-3-phosphoethanolamine + H2O = 1-hexadecanoyl-sn-glycero-3-phosphoethanolamine + (9Z,12Z)-octadecadienoate + H(+). The protein operates within lipid metabolism; fatty acid metabolism. Stimulated by cytosolic Ca(2+). Functionally, calcium-dependent phospholipase A2 that selectively hydrolyzes glycerophospholipids in the sn-2 position. Has a preference for linoleic acid at the sn-2 position. The protein is Cytosolic phospholipase A2 delta of Homo sapiens (Human).